The following is a 222-amino-acid chain: Methylthioribulose-1-phosphate dehydratase (222 aa).

The Zn(2+) site is built by histidine 94 and histidine 96.

It belongs to the aldolase class II family. MtnB subfamily. It depends on Zn(2+) as a cofactor.

The enzyme catalyses 5-(methylsulfanyl)-D-ribulose 1-phosphate = 5-methylsulfanyl-2,3-dioxopentyl phosphate + H2O. It functions in the pathway amino-acid biosynthesis; L-methionine biosynthesis via salvage pathway; L-methionine from S-methyl-5-thio-alpha-D-ribose 1-phosphate: step 2/6. Functionally, catalyzes the dehydration of methylthioribulose-1-phosphate (MTRu-1-P) into 2,3-diketo-5-methylthiopentyl-1-phosphate (DK-MTP-1-P). This chain is Methylthioribulose-1-phosphate dehydratase, found in Yersinia pseudotuberculosis serotype O:1b (strain IP 31758).